The following is a 133-amino-acid chain: Snaclec purpureotin subunit alpha (133 aa).

3 disulfide bridges follow: Cys-2-Cys-13, Cys-30-Cys-127, and Cys-102-Cys-119. The C-type lectin domain maps to Phe-9–Lys-128.

This sequence belongs to the snaclec family. In terms of assembly, homodimer (non-covalently linked) of heterodimer of alpha and beta subunits (disulfide-linked). In terms of tissue distribution, expressed by the venom gland.

The protein resides in the secreted. Functionally, snaclec that induces platelet aggregation without any cofactor in a dose-dependent manner. Its platelet aggregation effect is blocked by echicetin, suggesting it is a GPIb-binding protein which binds to the same or a closely related GPIb site on platelets as echicetin. The chain is Snaclec purpureotin subunit alpha from Trimeresurus purpureomaculatus (Mangrove pit viper).